We begin with the raw amino-acid sequence, 833 residues long: MRQCALFLTSLVPIVLAPRPPDEPGFGSPQRLEKLDSLLSDYDILSLSSIRQHSVRKRDLQASTHLETLLTFSALNRHFKLYLTSSTERFSQNFKVVVVDGEDESEYPVKWQDFFSGHVVGEPDSRVLAHIGDDDITVRINTDGAEYNIEPLWRLINDTKDKRVLVYKSEDIKNVSRLQSPKVCGYIKADNEELLPKGLVDREPPDELVHRVKRRADPNPLRNTCKLLVVADHRFYKYMGRGEESTTTNYLIELIDRVDDIYRNTSWDNAGFKGYGIQIEQIRILKSPQEVKPGERHYNMAKSYPNEEKDAWDVKMLLEQFSFDIAEEASKVCLAHLFTYQDFDMGTLGLAYVGSPRANSHGGVCPKAYYSPIGKKNIYLNSGLTSTKNYGKTILTKEADLVTTHELGHNFGAEHDPDGLAECAPNEDQGGKYVMYPIAVSGDHENNKMFSNCSKQSIYKTIESKAQECFQERSNKVCGNSRVDEGEECDPGIMYLNNDTCCNSDCTLRPGVQCSDRNSPCCKNCQFETAQKKCQEAINATCKGVSYCTGNSSECPPPGNAEDDTVCLDLGRCKDGKCVPFCEREQRLESCACNETDHSCKVCCRAPSGRCLPYVDAEQKNLFLRKGKPCTVGFCDMNGKCEKRVQDVIERFWEFIDKLSINTFGKFLADNIVGSVLVFSLMLWIPVSILVHCVDKKLDKQYESLSLLHPSNVEMLSSMDSASVRIIKPFPAPQTPGRLQPLQPLQPGPVLPSAPSVPVAPKLDHQRMDTIQEDPSTDSHVDEDGFEKDPFPNSSAAAKSFEDLTDHPVTRSEKASSFKLQRQSRVDSKETEC.

Positions 1–17 (MRQCALFLTSLVPIVLA) are cleaved as a signal peptide. One can recognise a Peptidase M12B domain in the interval 223–474 (NTCKLLVVAD…KAQECFQERS (252 aa)). The tract at residues 301–345 (AKSYPNEEKDAWDVKMLLEQFSFDIAEEASKVCLAHLFTYQDFDM) is interaction with classical swine fever virus envelope glycoprotein E2. Intrachain disulfides connect cysteine 365/cysteine 469, cysteine 423/cysteine 453, and cysteine 534/cysteine 555. Zn(2+) is bound at residue histidine 405. The active site involves glutamate 406. Residues histidine 409 and histidine 415 each contribute to the Zn(2+) site. In terms of domain architecture, Disintegrin spans 475 to 563 (NKVCGNSRVD…ECPPPGNAED (89 aa)). A helical transmembrane segment spans residues 672–692 (IVGSVLVFSLMLWIPVSILVH). 2 disordered regions span residues 735–760 (TPGR…VPVA) and 772–833 (QEDP…ETEC). Basic and acidic residues-rich tracts occupy residues 777–790 (TDSH…EKDP), 800–816 (SFED…EKAS), and 824–833 (SRVDSKETEC).

In terms of assembly, (Microbial infection) Interacts (via metalloproteinase domain) with classical swine fever virus envelope glycoprotein E2; this interaction allows binding and probably entry of the virus into the cell. As to quaternary structure, interacts with MAD2L1, MAPK14 and MUC1. Interacts with iRhom1/RHBDF1 and iRhom2/RHBDF2. Interacts with FRMD8 via its interaction with iRhom1/RHBDF1 and iRhom2/RHBDF2. The cofactor is Zn(2+). Post-translationally, the precursor is cleaved by a furin endopeptidase. In terms of processing, phosphorylated.

The protein resides in the membrane. It carries out the reaction Narrow endopeptidase specificity. Cleaves Pro-Leu-Ala-Gln-Ala-|-Val-Arg-Ser-Ser-Ser in the membrane-bound, 26-kDa form of tumor necrosis factor alpha (TNFalpha). Similarly cleaves other membrane-anchored, cell-surface proteins to 'shed' the extracellular domains.. Its function is as follows. Transmembrane metalloprotease which mediates the ectodomain shedding of a myriad of transmembrane proteins including adhesion proteins, growth factor precursors and cytokines important for inflammation and immunity. Cleaves the membrane-bound precursor of TNF-alpha to its mature soluble form. Responsible for the proteolytical release of soluble JAM3 from endothelial cells surface. Responsible for the proteolytic release of several other cell-surface proteins, including p75 TNF-receptor, interleukin 1 receptor type II, p55 TNF-receptor, transforming growth factor-alpha, L-selectin, growth hormone receptor, MUC1 and the amyloid precursor protein. Acts as an activator of Notch pathway by mediating cleavage of Notch, generating the membrane-associated intermediate fragment called Notch extracellular truncation (NEXT). Plays a role in the proteolytic processing of ACE2. Plays a role in hemostasis through shedding of GP1BA, the platelet glycoprotein Ib alpha chain. Mediates the proteolytic cleavage of LAG3, leading to release the secreted form of LAG3. Mediates the proteolytic cleavage of IL6R, leading to the release of secreted form of IL6R. Mediates the proteolytic cleavage and shedding of FCGR3A upon NK cell stimulation, a mechanism that allows for increased NK cell motility and detachment from opsonized target cells. Cleaves TREM2, resulting in shedding of the TREM2 ectodomain. In terms of biological role, (Microbial infection) Acts as a receptor for classical swine fever virus. The polypeptide is Disintegrin and metalloproteinase domain-containing protein 17 (ADAM17) (Sus scrofa (Pig)).